The following is a 325-amino-acid chain: uncharacterized protein (325 aa).

A disordered region spans residues 37–85; the sequence is EKPTYTPAKPVKKAPSVVQPRRVSRTLRSSESVHTNHGPERVFESPTPA. Residue serine 52 is modified to Phosphoserine. A compositionally biased stretch (polar residues) spans 62–71; that stretch reads TLRSSESVHT. Residues 153 to 311 form the FCP1 homology domain; sequence EDEGKKCLIL…IDLIPFLEHL (159 aa).

This is an uncharacterized protein from Schizosaccharomyces pombe (strain 972 / ATCC 24843) (Fission yeast).